The sequence spans 303 residues: MYYGFDIGGTKIALGAFDSTRRLQWEKRVPTPHTSYSAFLDAVCELVAEADQRFGVKGSVGIGIPGMPETEDGTLYAANVPAASGKPLRADLSARLDRDVRLDNDANCFALSEAWDDEFTQYPLVMGLILGTGVGGGLVLNGKPITGQSYITGEFGHMRLPVDALTLMGFDFPLRRCGCGQMGCIENYLSGRGFAWLYQHYYDQSLQAPEIIALWEQGDEQAHAHVERYLDLLAVCLGNILTIVDPDLLVIGGGLSNFTAITTQLAERLPRHLLPVARAPRIERARHGDAGGMRGAAFLHLTD.

ATP contacts are provided by residues 4-11 (GFDIGGTK) and 133-140 (GVGGGLVL). Positions 157, 177, 179, and 184 each coordinate Zn(2+).

It belongs to the ROK (NagC/XylR) family. NagK subfamily.

The enzyme catalyses N-acetyl-D-glucosamine + ATP = N-acetyl-D-glucosamine 6-phosphate + ADP + H(+). It participates in cell wall biogenesis; peptidoglycan recycling. Functionally, catalyzes the phosphorylation of N-acetyl-D-glucosamine (GlcNAc) derived from cell-wall degradation, yielding GlcNAc-6-P. The chain is N-acetyl-D-glucosamine kinase from Salmonella choleraesuis (strain SC-B67).